Here is a 169-residue protein sequence, read N- to C-terminus: S-ribosylhomocysteine lyase (169 aa).

Residues H54, H58, and C128 each coordinate Fe cation.

This sequence belongs to the LuxS family. In terms of assembly, homodimer. The cofactor is Fe cation.

The enzyme catalyses S-(5-deoxy-D-ribos-5-yl)-L-homocysteine = (S)-4,5-dihydroxypentane-2,3-dione + L-homocysteine. Its function is as follows. Involved in the synthesis of autoinducer 2 (AI-2) which is secreted by bacteria and is used to communicate both the cell density and the metabolic potential of the environment. The regulation of gene expression in response to changes in cell density is called quorum sensing. Catalyzes the transformation of S-ribosylhomocysteine (RHC) to homocysteine (HC) and 4,5-dihydroxy-2,3-pentadione (DPD). In Psychromonas ingrahamii (strain DSM 17664 / CCUG 51855 / 37), this protein is S-ribosylhomocysteine lyase.